Consider the following 179-residue polypeptide: uncharacterized protein (179 aa).

It is found in the virion. This is an uncharacterized protein from Acanthamoeba polyphaga (Amoeba).